A 38-amino-acid polypeptide reads, in one-letter code: IEAIRCGGSRDCYRPCQKRTGCPNAKCINKTCKCYGCS.

4 disulfide bridges follow: Cys6/Cys27, Cys12/Cys32, Cys16/Cys34, and Cys22/Cys37.

It belongs to the short scorpion toxin superfamily. Potassium channel inhibitor family. Alpha-KTx 06 subfamily. As to expression, expressed by the venom gland.

It localises to the secreted. Functionally, potently, completely and reversibly blocks voltage-gated potassium channel Kv1.2/KCNA2 and Shaker B (Sh). Also blocks small conductance (SK) calcium-activated potassium channel (KCNN). The protein is Potassium channel toxin alpha-KTx 6.4 of Pandinus imperator (Emperor scorpion).